Consider the following 284-residue polypeptide: MDLSRINTWKSKQLKSFLSSKDAFKADVHGHSALYYAIADNNVRLVCTLLNAGALKNLLENEFPLHQAATLEDTKIVKILLFSGLDDSQFDDKGNTALYYAVDSGNMQTVKLFVKKNWRLMFYGKTGWKTSFYHAVMLNDVSIVSYFLSEIPSTFDLAILLSCIHITIKNGHVDMMILLLDYMTSTNTNNSLLFIPDIKLAIDNKDIEMLQALFKYDINIYSANLENVLLDDAEIAKMIIEKHVEYKSDSYTKDLDIVKNNKLDEIISKNKELRLMYVNCVKKN.

ANK repeat units lie at residues 29-58, 60-89, 93-122, 127-157, 159-188, and 193-222; these read HGHS…LKNL, ENEF…DDSQ, KGNT…RLMF, GWKT…TFDL, ILLS…STNT, and LFIP…NIYS.

It belongs to the orthopoxvirus OPG039 family.

Its subcellular location is the host cytoplasm. It is found in the host nucleus. In terms of biological role, inhibits antiviral activity induced by type I interferons. Does not block signal transduction of IFN, but is important to counter the host antiviral state induced by a pre-treatment with IFN. Plays a role in the inhibition of host NF-kappa-B activation by preventing the acetylation of the RELA/p65 subunit of NF-kappaB. This Bos taurus (Bovine) protein is Interferon antagonist OPG040 (OPG039).